Reading from the N-terminus, the 100-residue chain is Small ribosomal subunit protein uS17 (100 aa).

It belongs to the universal ribosomal protein uS17 family. Part of the 30S ribosomal subunit.

Functionally, one of the primary rRNA binding proteins, it binds specifically to the 5'-end of 16S ribosomal RNA. The protein is Small ribosomal subunit protein uS17 of Fervidobacterium nodosum (strain ATCC 35602 / DSM 5306 / Rt17-B1).